The following is a 514-amino-acid chain: Sugar transport protein 10 (514 aa).

Over 1 to 18 (MAGGAFVSEGGGGGRSYE) the chain is Cytoplasmic. 10 helical membrane-spanning segments follow: residues 19–39 (GGVT…GLLF), 86–106 (LFTS…SVIT), 113–133 (VSMF…AFAV), 135–155 (VSML…ANQS), 170–190 (GALN…ANLI), 204–224 (VSLG…FILP), 285–305 (LIFC…VIMF), 320–340 (AALM…FVSI), 350–370 (LLFL…GSFI), and 389–409 (WILA…GPLG). C77 and C449 are oxidised to a cystine. Residue Q177 participates in beta-D-glucose binding. Beta-D-glucose is bound by residues Q295, Q296, N301, and N332. W410 contributes to the beta-D-glucose binding site. A run of 2 helical transmembrane segments spans residues 428 to 448 (INVS…LTML) and 453 to 473 (FGLF…IYFL). Residues 474-514 (LPETKGVPIEEMGRVWKQHWFWKKYIPEDAIIGGHDDNNTN) lie on the Cytoplasmic side of the membrane.

This sequence belongs to the major facilitator superfamily. Sugar transporter (TC 2.A.1.1) family. In terms of tissue distribution, expressed in primordia of lateral roots, pollinated stigmata, and pollen tubes.

The protein localises to the membrane. The enzyme catalyses D-glucose(out) + H(+)(out) = D-glucose(in) + H(+)(in). It carries out the reaction D-mannose(out) + H(+)(out) = D-mannose(in) + H(+)(in). It catalyses the reaction D-galactose(in) + H(+)(in) = D-galactose(out) + H(+)(out). Hexose-H(+) symporter that catalyzes the high-affinity uptake of glucose, galactose and mannose. Proton-coupled symporter responsible for the uptake of glucose from the apoplast into the cells. The sequence is that of Sugar transport protein 10 from Arabidopsis thaliana (Mouse-ear cress).